The primary structure comprises 209 residues: FMN-dependent NADH:quinone oxidoreductase (209 aa).

Residues Ser9 and 15-17 (SNS) contribute to the FMN site.

The protein belongs to the azoreductase type 1 family. As to quaternary structure, homodimer. FMN is required as a cofactor.

It catalyses the reaction 2 a quinone + NADH + H(+) = 2 a 1,4-benzosemiquinone + NAD(+). It carries out the reaction N,N-dimethyl-1,4-phenylenediamine + anthranilate + 2 NAD(+) = 2-(4-dimethylaminophenyl)diazenylbenzoate + 2 NADH + 2 H(+). In terms of biological role, quinone reductase that provides resistance to thiol-specific stress caused by electrophilic quinones. Its function is as follows. Also exhibits azoreductase activity. Catalyzes the reductive cleavage of the azo bond in aromatic azo compounds to the corresponding amines. The chain is FMN-dependent NADH:quinone oxidoreductase from Bordetella parapertussis (strain 12822 / ATCC BAA-587 / NCTC 13253).